The sequence spans 122 residues: Large ribosomal subunit protein uL14 (122 aa).

The protein belongs to the universal ribosomal protein uL14 family. Part of the 50S ribosomal subunit. Forms a cluster with proteins L3 and L19. In the 70S ribosome, L14 and L19 interact and together make contacts with the 16S rRNA in bridges B5 and B8.

Its function is as follows. Binds to 23S rRNA. Forms part of two intersubunit bridges in the 70S ribosome. In Lactococcus lactis subsp. lactis (strain IL1403) (Streptococcus lactis), this protein is Large ribosomal subunit protein uL14.